Consider the following 487-residue polypeptide: E3 ubiquitin-protein ligase TRIM50 (487 aa).

An RING-type zinc finger spans residues 16 to 57 (CPICLEVFKEPLMLQCGHSYCKGCLVSLSCHLDAELRCPVCR). A B box-type zinc finger spans residues 84 to 125 (PEPKVCVHHRNPLSLFCEKDQELICGLCGLLGSHQHHPVTPV). Cys-89, His-92, Cys-111, and His-117 together coordinate Zn(2+). Coiled-coil stretches lie at residues 125–169 (VSTV…NESD) and 204–235 (LVAS…FGNE). The 200-residue stretch at 276–475 (DIKLTVWKRL…LPMVLPPPSG (200 aa)) folds into the B30.2/SPRY domain. Position 373 is an N6-acetyllysine (Lys-373). Positions 468–487 (MVLPPPSGPGPLSPEQPTKL) are disordered. A compositionally biased stretch (pro residues) spans 469–481 (VLPPPSGPGPLSP).

Belongs to the TRIM/RBCC family. In terms of assembly, can form dimers and trimers. Interacts with several E2 ubiquitin-conjugating enzymes, including UBE2L6, UBE2E1, UBE2E3. No interaction with UBE2H. Interacts with BECN1. Interacts with SQSTM1. Interacts with NLRP3. Post-translationally, auto-ubiquitinated. In terms of processing, acetylated by EP300 and KAT2B. HDAC6 drives TRIM50 deacetylation. Acetylation antagonizes with TRIM50 ubiquitination.

It is found in the cytoplasm. It catalyses the reaction S-ubiquitinyl-[E2 ubiquitin-conjugating enzyme]-L-cysteine + [acceptor protein]-L-lysine = [E2 ubiquitin-conjugating enzyme]-L-cysteine + N(6)-ubiquitinyl-[acceptor protein]-L-lysine.. Functionally, E3 ubiquitin-protein ligase that ubiquitinates Beclin-1/BECN1 in a 'Lys-63'-dependent manner enhancing its binding to ULK1. In turn, promotes starvation-induced autophagy activation. Also interacts with p62/SQSTM1 protein and thereby induces the formation and the autophagy clearance of aggresome-associated polyubiquitinated proteins through HDAC6 interaction. Also promotes NLRP3 inflammasome activation by directly inducing NLRP3 oligomerization independent of its E3 ligase function. The chain is E3 ubiquitin-protein ligase TRIM50 from Homo sapiens (Human).